The following is a 1519-amino-acid chain: Putative lipoprotein YghJ (1519 aa).

The first 23 residues, 1 to 23, serve as a signal peptide directing secretion; that stretch reads MNKKFKYKKSLLAAILSATLLAG. Disordered stretches follow at residues 22–107 and 226–247; these read AGCD…GATC and NAAT…TTPG. Cysteine 24 carries N-palmitoyl cysteine lipidation. The S-diacylglycerol cysteine moiety is linked to residue cysteine 24. Residues 31 to 42 show a composition bias toward low complexity; it reads SSSDTPPVDSGT. Residues 51 to 77 are compositionally biased toward pro residues; the sequence is DPTPNPEPTPEPTPDPEPTPEPIPDPE. Polar residues predominate over residues 97–107; that stretch reads GGSQRVTGATC. Residues 234-247 are compositionally biased toward low complexity; the sequence is STHTSPVVPVTTPG. The Peptidase M60 domain occupies 1080–1380; that stretch reads GNMQSTGLWA…MYAQLKEWAE (301 aa). The disordered stretch occupies residues 1497 to 1519; that stretch reads DLPKPEQGPETINQVTEHKMSAE.

This sequence to V.cholerae AcfD (VC_0845).

It localises to the cell membrane. May be a substrate of the type II secretion system beta (T2SS-beta). This is Putative lipoprotein YghJ (yghJ) from Escherichia coli O78:H11 (strain H10407 / ETEC).